The chain runs to 513 residues: ATP synthase subunit alpha 1 (513 aa).

169-176 (GDRQTGKT) lines the ATP pocket.

Belongs to the ATPase alpha/beta chains family. F-type ATPases have 2 components, CF(1) - the catalytic core - and CF(0) - the membrane proton channel. CF(1) has five subunits: alpha(3), beta(3), gamma(1), delta(1), epsilon(1). CF(0) has three main subunits: a(1), b(2) and c(9-12). The alpha and beta chains form an alternating ring which encloses part of the gamma chain. CF(1) is attached to CF(0) by a central stalk formed by the gamma and epsilon chains, while a peripheral stalk is formed by the delta and b chains.

The protein localises to the cell inner membrane. The enzyme catalyses ATP + H2O + 4 H(+)(in) = ADP + phosphate + 5 H(+)(out). Functionally, produces ATP from ADP in the presence of a proton gradient across the membrane. The alpha chain is a regulatory subunit. The protein is ATP synthase subunit alpha 1 of Nitrosospira multiformis (strain ATCC 25196 / NCIMB 11849 / C 71).